Reading from the N-terminus, the 975-residue chain is Glycine dehydrogenase (decarboxylating) (975 aa).

K723 is subject to N6-(pyridoxal phosphate)lysine.

It belongs to the GcvP family. The glycine cleavage system is composed of four proteins: P, T, L and H. It depends on pyridoxal 5'-phosphate as a cofactor.

The enzyme catalyses N(6)-[(R)-lipoyl]-L-lysyl-[glycine-cleavage complex H protein] + glycine + H(+) = N(6)-[(R)-S(8)-aminomethyldihydrolipoyl]-L-lysyl-[glycine-cleavage complex H protein] + CO2. Functionally, the glycine cleavage system catalyzes the degradation of glycine. The P protein binds the alpha-amino group of glycine through its pyridoxal phosphate cofactor; CO(2) is released and the remaining methylamine moiety is then transferred to the lipoamide cofactor of the H protein. In Burkholderia lata (strain ATCC 17760 / DSM 23089 / LMG 22485 / NCIMB 9086 / R18194 / 383), this protein is Glycine dehydrogenase (decarboxylating).